Consider the following 382-residue polypeptide: Queuine tRNA-ribosyltransferase (382 aa).

The active-site Proton acceptor is the D96. Substrate-binding positions include 96–100 (DSGGF), D151, Q194, and G221. Positions 252–258 (GVGAPDS) are RNA binding. D271 acts as the Nucleophile in catalysis. The RNA binding; important for wobble base 34 recognition stretch occupies residues 276-280 (TRIAR). Positions 309, 311, 314, and 340 each coordinate Zn(2+).

The protein belongs to the queuine tRNA-ribosyltransferase family. Homodimer. Within each dimer, one monomer is responsible for RNA recognition and catalysis, while the other monomer binds to the replacement base PreQ1. Zn(2+) is required as a cofactor.

The enzyme catalyses 7-aminomethyl-7-carbaguanine + guanosine(34) in tRNA = 7-aminomethyl-7-carbaguanosine(34) in tRNA + guanine. It functions in the pathway tRNA modification; tRNA-queuosine biosynthesis. In terms of biological role, catalyzes the base-exchange of a guanine (G) residue with the queuine precursor 7-aminomethyl-7-deazaguanine (PreQ1) at position 34 (anticodon wobble position) in tRNAs with GU(N) anticodons (tRNA-Asp, -Asn, -His and -Tyr). Catalysis occurs through a double-displacement mechanism. The nucleophile active site attacks the C1' of nucleotide 34 to detach the guanine base from the RNA, forming a covalent enzyme-RNA intermediate. The proton acceptor active site deprotonates the incoming PreQ1, allowing a nucleophilic attack on the C1' of the ribose to form the product. After dissociation, two additional enzymatic reactions on the tRNA convert PreQ1 to queuine (Q), resulting in the hypermodified nucleoside queuosine (7-(((4,5-cis-dihydroxy-2-cyclopenten-1-yl)amino)methyl)-7-deazaguanosine). The chain is Queuine tRNA-ribosyltransferase from Lactococcus lactis subsp. cremoris (strain MG1363).